The chain runs to 1510 residues: ABC transporter C family MRP4 (1510 aa).

Transmembrane regions (helical) follow at residues 12 to 32, 55 to 75, 78 to 98, 109 to 129, 138 to 158, 177 to 197, 319 to 339, 342 to 362, 373 to 393, 427 to 447, 453 to 473, and 540 to 560; these read EAVA…LLLL, PAVV…AGAW, AVLA…SYEV, ALLL…LALQ, FPAL…VIAY, MVAN…GVMG, TFAA…SYFV, LSGN…FFVA, WYLG…AMVY, AWYF…LAIL, IAMV…VPVA, and FVFW…CILL. Residues 320-595 enclose the ABC transmembrane type-1 1 domain; that stretch reads FAAVNTIVSY…FPDLISMMAQ (276 aa). The region spanning 629–852 is the ABC transporter 1 domain; it reads VDIKDGAFSW…GTDFNALVSA (224 aa). An ATP-binding site is contributed by 664–671; the sequence is GVIGSGKS. The disordered stretch occupies residues 889-925; the sequence is LKNKMCENGQPSNTRGIKEKKKKEERKKKRTVQEEER. The segment covering 906-918 has biased composition (basic residues); sequence KEKKKKEERKKKR. 6 helical membrane passes run 945-965, 985-1005, 1060-1082, 1086-1108, 1154-1174, and 1179-1199; these read GTLI…QIAS, SVVL…FVFM, IAFR…AVMS, WQVL…YYIA, LLDC…WLCL, and LSTF…PGTI. Residues 950–1220 form the ABC transmembrane type-1 2 domain; it reads LIILAQTMFQ…GLNLNARMSR (271 aa). The 235-residue stretch at 1267–1501 folds into the ABC transporter 2 domain; that stretch reads IELIDLKVRY…KSSMFIQLVS (235 aa). 1301–1308 provides a ligand contact to ATP; sequence GRTGSGKS.

This sequence belongs to the ABC transporter superfamily. ABCC family. Conjugate transporter (TC 3.A.1.208) subfamily. As to expression, expressed in roots, leaves, stalks, tassels, silks, developing seeds and developing embryos.

It is found in the membrane. In terms of biological role, ABC transporter that may affect phytic acid transport and compartmentalization. May function directly or indirectly in removing phytic acid from the cytosol or in vesicle trafficking. Required for phytic acid accumulation in developing seeds. Phytic acid is the primary storage form of phosphorus in cereal grains and other plant seeds. This is ABC transporter C family MRP4 from Zea mays (Maize).